The following is a 390-amino-acid chain: Guanidine hydrolase (390 aa).

Histidine 174, aspartate 199, histidine 201, aspartate 203, aspartate 291, and aspartate 293 together coordinate Ni(2+).

This sequence belongs to the arginase family. As to quaternary structure, homohexamer. The cofactor is Ni(2+).

The protein localises to the cytoplasm. The enzyme catalyses guanidine + H2O = urea + NH4(+). Its activity is regulated as follows. Activation of GdmH depends on the presence of the accessory proteins GhaA (Sll1078) and GhaB (Sll1079), which load nickel into the active site. Hydrolase activity is slightly activated in the presence of GTP. It does not require ATP or NAD(P)H. Addition of Ca(2+), Mn(2+), Fe(2+) or Fe(3+) has no consistent effects, whereas addition of Co(2+), Cu(2+) or Zn(2+) inhibits the activity. Functionally, catalyzes the hydrolysis of guanidine into urea and ammonium. Is highly specific for free guanidine. At pH 8, also catalyzes the release of urea from methylguanidine but with significantly reduced specific activity compared with that for guanidine. Cannot hydrolyze guanidinoacetate, guanidinopropionate, guanidinobutyrate, agmatine, arginine or creatine. Required to use guanidine as the sole nitrogen source for growth. Overexpression of the gene accelerates guanidine degradation and promotes biomass growth. The chain is Guanidine hydrolase from Synechocystis sp. (strain ATCC 27184 / PCC 6803 / Kazusa).